A 269-amino-acid polypeptide reads, in one-letter code: Diaminopimelate epimerase (269 aa).

Residues Asn-20 and Asn-63 each contribute to the substrate site. Cys-72 serves as the catalytic Proton donor. Substrate contacts are provided by residues 73–74, Asn-179, and 197–198; these read GN and ER. Cys-207 functions as the Proton acceptor in the catalytic mechanism. 208–209 is a substrate binding site; that stretch reads GT.

Belongs to the diaminopimelate epimerase family. Homodimer.

It localises to the cytoplasm. It catalyses the reaction (2S,6S)-2,6-diaminopimelate = meso-2,6-diaminopimelate. The protein operates within amino-acid biosynthesis; L-lysine biosynthesis via DAP pathway; DL-2,6-diaminopimelate from LL-2,6-diaminopimelate: step 1/1. Its function is as follows. Catalyzes the stereoinversion of LL-2,6-diaminopimelate (L,L-DAP) to meso-diaminopimelate (meso-DAP), a precursor of L-lysine and an essential component of the bacterial peptidoglycan. In Chlamydia muridarum (strain MoPn / Nigg), this protein is Diaminopimelate epimerase.